The sequence spans 451 residues: Phosphoglucosamine mutase (451 aa).

Ser101 (phosphoserine intermediate) is an active-site residue. Residues Ser101, Asp243, Asp245, and Asp247 each coordinate Mg(2+). Residue Ser101 is modified to Phosphoserine.

It belongs to the phosphohexose mutase family. Requires Mg(2+) as cofactor. In terms of processing, activated by phosphorylation.

The enzyme catalyses alpha-D-glucosamine 1-phosphate = D-glucosamine 6-phosphate. Its function is as follows. Catalyzes the conversion of glucosamine-6-phosphate to glucosamine-1-phosphate. The sequence is that of Phosphoglucosamine mutase from Geobacter metallireducens (strain ATCC 53774 / DSM 7210 / GS-15).